Reading from the N-terminus, the 171-residue chain is Phosphopantetheine adenylyltransferase (171 aa).

Substrate is bound at residue Thr9. Residues 9-10 and His17 each bind ATP; that span reads TF. Residues Lys41, Leu73, and Arg87 each contribute to the substrate site. ATP-binding positions include 88 to 90, Glu98, and 123 to 129; these read GLR and YQFISGT.

It belongs to the bacterial CoaD family. Homohexamer. Mg(2+) serves as cofactor.

The protein localises to the cytoplasm. It carries out the reaction (R)-4'-phosphopantetheine + ATP + H(+) = 3'-dephospho-CoA + diphosphate. It functions in the pathway cofactor biosynthesis; coenzyme A biosynthesis; CoA from (R)-pantothenate: step 4/5. Reversibly transfers an adenylyl group from ATP to 4'-phosphopantetheine, yielding dephospho-CoA (dPCoA) and pyrophosphate. This is Phosphopantetheine adenylyltransferase from Paraburkholderia xenovorans (strain LB400).